Here is a 307-residue protein sequence, read N- to C-terminus: tRNA pseudouridine synthase B (307 aa).

Aspartate 38 serves as the catalytic Nucleophile.

Belongs to the pseudouridine synthase TruB family. Type 1 subfamily.

It catalyses the reaction uridine(55) in tRNA = pseudouridine(55) in tRNA. Responsible for synthesis of pseudouridine from uracil-55 in the psi GC loop of transfer RNAs. The protein is tRNA pseudouridine synthase B of Bacillus anthracis.